The primary structure comprises 208 residues: Outer-membrane lipoprotein carrier protein (208 aa).

The signal sequence occupies residues 1-21; it reads MRLIRTLFVAALAMGTSLAHA.

Belongs to the LolA family. Monomer.

It localises to the periplasm. Participates in the translocation of lipoproteins from the inner membrane to the outer membrane. Only forms a complex with a lipoprotein if the residue after the N-terminal Cys is not an aspartate (The Asp acts as a targeting signal to indicate that the lipoprotein should stay in the inner membrane). The chain is Outer-membrane lipoprotein carrier protein from Pseudomonas paraeruginosa (strain DSM 24068 / PA7) (Pseudomonas aeruginosa (strain PA7)).